The sequence spans 52 residues: Conotoxin-like peptide 2 (52 aa).

A signal peptide spans 1–18 (MKFSTILLLVCPTVALSA). Intrachain disulfides connect Cys-24–Cys-38, Cys-31–Cys-42, and Cys-37–Cys-49.

The protein resides in the secreted. The protein is Conotoxin-like peptide 2 (CTL-2) of Orgyia pseudotsugata (Douglas-fir tussock moth).